Reading from the N-terminus, the 397-residue chain is Chorismate synthase (397 aa).

NADP(+) contacts are provided by Arg40 and Arg46. Residues 129–131, 257–258, Gly302, 317–321, and Arg343 contribute to the FMN site; these read RSS, QA, and KPISS.

This sequence belongs to the chorismate synthase family. Homotetramer. It depends on FMNH2 as a cofactor.

The enzyme catalyses 5-O-(1-carboxyvinyl)-3-phosphoshikimate = chorismate + phosphate. Its pathway is metabolic intermediate biosynthesis; chorismate biosynthesis; chorismate from D-erythrose 4-phosphate and phosphoenolpyruvate: step 7/7. Its function is as follows. Catalyzes the anti-1,4-elimination of the C-3 phosphate and the C-6 proR hydrogen from 5-enolpyruvylshikimate-3-phosphate (EPSP) to yield chorismate, which is the branch point compound that serves as the starting substrate for the three terminal pathways of aromatic amino acid biosynthesis. This reaction introduces a second double bond into the aromatic ring system. This is Chorismate synthase from Pelodictyon phaeoclathratiforme (strain DSM 5477 / BU-1).